The sequence spans 79 residues: Exodeoxyribonuclease 7 small subunit (79 aa).

This sequence belongs to the XseB family. In terms of assembly, heterooligomer composed of large and small subunits.

It is found in the cytoplasm. The enzyme catalyses Exonucleolytic cleavage in either 5'- to 3'- or 3'- to 5'-direction to yield nucleoside 5'-phosphates.. In terms of biological role, bidirectionally degrades single-stranded DNA into large acid-insoluble oligonucleotides, which are then degraded further into small acid-soluble oligonucleotides. The sequence is that of Exodeoxyribonuclease 7 small subunit from Dechloromonas aromatica (strain RCB).